The following is an 859-amino-acid chain: Protein translocase subunit SecA (859 aa).

ATP is bound by residues Gln-88, 106 to 110, and Asp-496; that span reads GEGKT. Residues 818 to 838 are disordered; that stretch reads FSHQPQSEVKVSRNDPCPCGS. Positions 834, 836, 845, and 846 each coordinate Zn(2+).

This sequence belongs to the SecA family. As to quaternary structure, monomer and homodimer. Part of the essential Sec protein translocation apparatus which comprises SecA, SecYEG and auxiliary proteins SecDF-YajC and YidC. The cofactor is Zn(2+).

It localises to the cell inner membrane. The protein resides in the cytoplasm. It catalyses the reaction ATP + H2O + cellular proteinSide 1 = ADP + phosphate + cellular proteinSide 2.. Functionally, part of the Sec protein translocase complex. Interacts with the SecYEG preprotein conducting channel. Has a central role in coupling the hydrolysis of ATP to the transfer of proteins into and across the cell membrane, serving as an ATP-driven molecular motor driving the stepwise translocation of polypeptide chains across the membrane. This chain is Protein translocase subunit SecA, found in Wolinella succinogenes (strain ATCC 29543 / DSM 1740 / CCUG 13145 / JCM 31913 / LMG 7466 / NCTC 11488 / FDC 602W) (Vibrio succinogenes).